We begin with the raw amino-acid sequence, 321 residues long: Gap junction delta-2 protein (321 aa).

Over 1-19 the chain is Cytoplasmic; the sequence is MGEWTILERLLEAAVQQHS. Residues 20–42 traverse the membrane as a helical segment; sequence TMIGRILLTVVVIFRILIVAIVG. At 43–75 the chain is on the extracellular side; it reads ETVYDDEQTMFVCNTLQPGCNQACYDRAFPISH. Residues 76 to 98 traverse the membrane as a helical segment; it reads IRYWVFQIIMVCTPSLCFITYSV. At 99 to 197 the chain is on the cytoplasmic side; the sequence is HQSAKQRERR…KLRRQEGISR (99 aa). The disordered stretch occupies residues 117–141; it reads DRDPPESMGGPGGTGGGGSGGGKRE. Residues 125–137 show a composition bias toward gly residues; it reads GGPGGTGGGGSGG. Residues 198-220 form a helical membrane-spanning segment; the sequence is FYIIQVVFRNALEIGFLVGQYFL. The Extracellular segment spans residues 221-252; sequence YGFSVPGLYECDRYPCIKEVECYVSRPTEKTV. The chain crosses the membrane as a helical span at residues 253–275; sequence FLVFMFAVSGICVVLNLAELNHL. The Cytoplasmic segment spans residues 276–321; sequence GWRKIKLAVRGAQAKRKSVYEIRNKDLPRVSVPNFGRTQSSDSAYV.

It belongs to the connexin family. Delta-type subfamily. A connexon is composed of a hexamer of connexins.

Its subcellular location is the cell membrane. It is found in the cell junction. The protein localises to the gap junction. Its function is as follows. One gap junction consists of a cluster of closely packed pairs of transmembrane channels, the connexons, through which materials of low MW diffuse from one cell to a neighboring cell. The protein is Gap junction delta-2 protein (GJD2) of Bos taurus (Bovine).